Reading from the N-terminus, the 131-residue chain is Torsin-1A-interacting protein 2, isoform IFRG15 (131 aa).

This chain is Torsin-1A-interacting protein 2, isoform IFRG15 (TOR1AIP2), found in Homo sapiens (Human).